Here is a 176-residue protein sequence, read N- to C-terminus: ATP-dependent protease subunit HslV (176 aa).

Residue Thr2 is part of the active site. Gly157, Cys160, and Thr163 together coordinate Na(+).

It belongs to the peptidase T1B family. HslV subfamily. In terms of assembly, a double ring-shaped homohexamer of HslV is capped on each side by a ring-shaped HslU homohexamer. The assembly of the HslU/HslV complex is dependent on binding of ATP.

The protein resides in the cytoplasm. The catalysed reaction is ATP-dependent cleavage of peptide bonds with broad specificity.. With respect to regulation, allosterically activated by HslU binding. Protease subunit of a proteasome-like degradation complex believed to be a general protein degrading machinery. The polypeptide is ATP-dependent protease subunit HslV (Enterobacter sp. (strain 638)).